The following is a 405-amino-acid chain: Cytochrome b (405 aa).

Residues 44–64 (FGSLAGIAMIIMIATGIFLAM) traverse the membrane as a helical segment. Residues H94 and H108 each coordinate heme b. Transmembrane regions (helical) follow at residues 97 to 117 (GASM…YYGS), 124 to 144 (VLWW…FMGY), 163 to 183 (FSAI…GFSV), 191 to 211 (FFSL…LHMW), 245 to 265 (FGLG…PNFF), 303 to 323 (LGGV…PWLD), 338 to 358 (GFFW…AMPA), and 368 to 388 (LATI…GWFE). Heme b contacts are provided by H195 and H209.

The protein belongs to the cytochrome b family. In terms of assembly, the main subunits of complex b-c1 are: cytochrome b, cytochrome c1 and the Rieske protein. It depends on heme b as a cofactor.

It is found in the cell membrane. In terms of biological role, component of the ubiquinol-cytochrome c reductase complex (complex III or cytochrome b-c1 complex), which is a respiratory chain that generates an electrochemical potential coupled to ATP synthesis. This chain is Cytochrome b (petB), found in Rhodospirillum rubrum.